Reading from the N-terminus, the 782-residue chain is Endonuclease MutS2 (782 aa).

Position 336-343 (336-343 (GPNTGGKT)) interacts with ATP. The Smr domain occupies 707 to 782 (LDLRGYRYED…GFGVTVATLK (76 aa)).

The protein belongs to the DNA mismatch repair MutS family. MutS2 subfamily. Homodimer. Binds to stalled ribosomes, contacting rRNA.

Functionally, endonuclease that is involved in the suppression of homologous recombination and thus may have a key role in the control of bacterial genetic diversity. Its function is as follows. Acts as a ribosome collision sensor, splitting the ribosome into its 2 subunits. Detects stalled/collided 70S ribosomes which it binds and splits by an ATP-hydrolysis driven conformational change. Acts upstream of the ribosome quality control system (RQC), a ribosome-associated complex that mediates the extraction of incompletely synthesized nascent chains from stalled ribosomes and their subsequent degradation. Probably generates substrates for RQC. The sequence is that of Endonuclease MutS2 from Staphylococcus aureus (strain JH1).